Reading from the N-terminus, the 133-residue chain is NADPH-dependent 7-cyano-7-deazaguanine reductase (133 aa).

The active-site Thioimide intermediate is the cysteine 46. Catalysis depends on aspartate 53, which acts as the Proton donor. Residues 68-70 (VEL) and 87-88 (HE) contribute to the substrate site.

It belongs to the GTP cyclohydrolase I family. QueF type 1 subfamily.

It localises to the cytoplasm. It carries out the reaction 7-aminomethyl-7-carbaguanine + 2 NADP(+) = 7-cyano-7-deazaguanine + 2 NADPH + 3 H(+). Its pathway is tRNA modification; tRNA-queuosine biosynthesis. Catalyzes the NADPH-dependent reduction of 7-cyano-7-deazaguanine (preQ0) to 7-aminomethyl-7-deazaguanine (preQ1). The protein is NADPH-dependent 7-cyano-7-deazaguanine reductase of Parasynechococcus marenigrum (strain WH8102).